We begin with the raw amino-acid sequence, 96 residues long: Large ribosomal subunit protein bL21 (96 aa).

Positions 73 to 84 are enriched in basic residues; the sequence is KRRKRYQSRNGH. The disordered stretch occupies residues 73–96; that stretch reads KRRKRYQSRNGHRQQMTQIEVVSL. Over residues 85–96 the composition is skewed to polar residues; it reads RQQMTQIEVVSL.

This sequence belongs to the bacterial ribosomal protein bL21 family. As to quaternary structure, part of the 50S ribosomal subunit. Contacts protein L20.

In terms of biological role, this protein binds to 23S rRNA in the presence of protein L20. The protein is Large ribosomal subunit protein bL21 of Chlorobium phaeovibrioides (strain DSM 265 / 1930) (Prosthecochloris vibrioformis (strain DSM 265)).